The primary structure comprises 412 residues: uncharacterized protein (412 aa).

Residues Cys-62, Cys-68, Cys-71, and Cys-143 each contribute to the [4Fe-4S] cluster site. S-adenosyl-L-methionine-binding residues include Gln-243, Phe-270, Glu-290, and Asp-338. The active-site Nucleophile is Cys-364.

This sequence belongs to the class I-like SAM-binding methyltransferase superfamily. RNA M5U methyltransferase family.

This is an uncharacterized protein from Mesorhizobium japonicum (strain LMG 29417 / CECT 9101 / MAFF 303099) (Mesorhizobium loti (strain MAFF 303099)).